The chain runs to 538 residues: Probable cytochrome P450 309a2 (538 aa).

Residue Cys483 coordinates heme.

This sequence belongs to the cytochrome P450 family. Heme serves as cofactor.

It localises to the endoplasmic reticulum membrane. Its subcellular location is the microsome membrane. May be involved in the metabolism of insect hormones and in the breakdown of synthetic insecticides. The sequence is that of Probable cytochrome P450 309a2 (Cyp309a2) from Drosophila melanogaster (Fruit fly).